The sequence spans 318 residues: Acetyl-coenzyme A carboxylase carboxyl transferase subunit alpha (318 aa).

Residues Asp31–Ala292 form the CoA carboxyltransferase C-terminal domain.

This sequence belongs to the AccA family. In terms of assembly, acetyl-CoA carboxylase is a heterohexamer composed of biotin carboxyl carrier protein (AccB), biotin carboxylase (AccC) and two subunits each of ACCase subunit alpha (AccA) and ACCase subunit beta (AccD).

The protein resides in the cytoplasm. The catalysed reaction is N(6)-carboxybiotinyl-L-lysyl-[protein] + acetyl-CoA = N(6)-biotinyl-L-lysyl-[protein] + malonyl-CoA. Its pathway is lipid metabolism; malonyl-CoA biosynthesis; malonyl-CoA from acetyl-CoA: step 1/1. Component of the acetyl coenzyme A carboxylase (ACC) complex. First, biotin carboxylase catalyzes the carboxylation of biotin on its carrier protein (BCCP) and then the CO(2) group is transferred by the carboxyltransferase to acetyl-CoA to form malonyl-CoA. The sequence is that of Acetyl-coenzyme A carboxylase carboxyl transferase subunit alpha from Listeria monocytogenes serotype 4a (strain HCC23).